The primary structure comprises 478 residues: Isoeugenol monooxygenase (478 aa).

Residues histidine 167, histidine 218, histidine 282, and histidine 471 each coordinate Fe cation.

It belongs to the carotenoid oxygenase family. As to quaternary structure, monomer. It depends on Fe(2+) as a cofactor.

The catalysed reaction is (E)-isoeugenol + O2 = vanillin + acetaldehyde. Inhibited by HgCl(2), AgNO(3), CuCl(2), phenylhydrazine, 8-hydroxyquinoline, R-cycloserine and p-chloromercuribenzoic acid. Its function is as follows. Involved in isoeugenol degradation. Catalyzes the oxidative cleavage of the side chain double-bond of isoeugenol to form vanillin and acetaldehyde. The polypeptide is Isoeugenol monooxygenase (Pseudomonas putida (Arthrobacter siderocapsulatus)).